Reading from the N-terminus, the 123-residue chain is Small ribosomal subunit protein uS12 (123 aa).

The span at 10–20 (KGRKKVKKKKT) shows a compositional bias: basic residues. The segment at 10 to 32 (KGRKKVKKKKTAPALQGSPQKRG) is disordered. 3-methylthioaspartic acid is present on Asp-89.

Belongs to the universal ribosomal protein uS12 family. Part of the 30S ribosomal subunit. Contacts proteins S8 and S17. May interact with IF1 in the 30S initiation complex.

Its function is as follows. With S4 and S5 plays an important role in translational accuracy. Functionally, interacts with and stabilizes bases of the 16S rRNA that are involved in tRNA selection in the A site and with the mRNA backbone. Located at the interface of the 30S and 50S subunits, it traverses the body of the 30S subunit contacting proteins on the other side and probably holding the rRNA structure together. The combined cluster of proteins S8, S12 and S17 appears to hold together the shoulder and platform of the 30S subunit. This is Small ribosomal subunit protein uS12 from Halothermothrix orenii (strain H 168 / OCM 544 / DSM 9562).